The sequence spans 147 residues: Hemoglobin subunit delta (147 aa).

The Globin domain occupies 3–147 (NLTAAEKTQV…VANALAHKYH (145 aa)). His-64 and His-93 together coordinate heme b.

Belongs to the globin family. Heterotetramer of two delta chains and two alpha chains. In terms of tissue distribution, red blood cells.

The chain is Hemoglobin subunit delta (HBD) from Loxodonta africana (African elephant).